A 573-amino-acid polypeptide reads, in one-letter code: Probable cytochrome c oxidase subunit 1 (573 aa).

A helical membrane pass occupies residues 40 to 60 (IGIMYCVACISFFFIGGLLAL). Residue histidine 86 participates in Fe(II)-heme a binding. 6 helical membrane-spanning segments follow: residues 89-109 (IMLL…VLPL), 121-141 (LNAF…AGFI), 170-190 (LWIM…VNMI), 213-233 (IMVT…ALFG), 258-278 (LFWF…FGIV), and 290-310 (IFGY…SVAV). Cu cation contacts are provided by histidine 264 and tyrosine 268. The segment at residues 264–268 (HPEVY) is a cross-link (1'-histidyl-3'-tyrosine (His-Tyr)). Residues histidine 313 and histidine 314 each coordinate Cu cation. 2 helical membrane passes run 315–335 (MFAT…LIAV) and 359–379 (MLFS…GVLL). Residue histidine 397 participates in heme a3 binding. Helical transmembrane passes span 398–418 (FHYV…YFWF), 433–453 (LHFW…HWLG), and 476–496 (VSTI…WNVF). Histidine 399 is a binding site for Fe(II)-heme a.

It belongs to the heme-copper respiratory oxidase family.

It localises to the cell membrane. The catalysed reaction is 4 Fe(II)-[cytochrome c] + O2 + 8 H(+)(in) = 4 Fe(III)-[cytochrome c] + 2 H2O + 4 H(+)(out). It participates in energy metabolism; oxidative phosphorylation. Its function is as follows. Cytochrome c oxidase is the component of the respiratory chain that catalyzes the reduction of oxygen to water. Subunits 1-3 form the functional core of the enzyme complex. CO I is the catalytic subunit of the enzyme. Electrons originating in cytochrome c are transferred via the copper A center of subunit 2 and heme A of subunit 1 to the bimetallic center formed by heme A3 and copper B. The chain is Probable cytochrome c oxidase subunit 1 (ctaD) from Mycobacterium bovis (strain ATCC BAA-935 / AF2122/97).